Here is a 298-residue protein sequence, read N- to C-terminus: GTPase Era (298 aa).

One can recognise an Era-type G domain in the interval 3–170 (KSGFVAILGR…IKLLTDNLEE (168 aa)). The segment at 11 to 18 (GRPNVGKS) is G1. Residue 11–18 (GRPNVGKS) coordinates GTP. A G2 region spans residues 37 to 41 (QTTRN). Residues 58–61 (DTPG) are G3. GTP contacts are provided by residues 58 to 62 (DTPGI) and 120 to 123 (NKID). The G4 stretch occupies residues 120–123 (NKID). The tract at residues 149–151 (ISA) is G5. The 79-residue stretch at 201-279 (TQQEVPHSVA…YLETWVKVKK (79 aa)) folds into the KH type-2 domain.

This sequence belongs to the TRAFAC class TrmE-Era-EngA-EngB-Septin-like GTPase superfamily. Era GTPase family. As to quaternary structure, monomer.

Its subcellular location is the cytoplasm. The protein localises to the cell membrane. Its function is as follows. An essential GTPase that binds both GDP and GTP, with rapid nucleotide exchange. Plays a role in 16S rRNA processing and 30S ribosomal subunit biogenesis and possibly also in cell cycle regulation and energy metabolism. This is GTPase Era from Streptococcus pyogenes serotype M4 (strain MGAS10750).